A 723-amino-acid polypeptide reads, in one-letter code: Translation initiation factor IF-2 (723 aa).

A disordered region spans residues 112–138 (KIFNNKKNKKQKPQQAPQQEVQKKKEK). Residues 114–123 (FNNKKNKKQK) are compositionally biased toward basic residues. Residues 224-393 (ERPPVVTIMG…LLVSEMEELK (170 aa)) enclose the tr-type G domain. The tract at residues 233–240 (GHVDHGKT) is G1. A GTP-binding site is contributed by 233–240 (GHVDHGKT). Residues 258 to 262 (GITQH) are G2. Residues 279 to 282 (DTPG) are G3. GTP contacts are provided by residues 279-283 (DTPGH) and 333-336 (NKID). The segment at 333–336 (NKID) is G4. The tract at residues 369–371 (SAL) is G5.

This sequence belongs to the TRAFAC class translation factor GTPase superfamily. Classic translation factor GTPase family. IF-2 subfamily.

The protein localises to the cytoplasm. One of the essential components for the initiation of protein synthesis. Protects formylmethionyl-tRNA from spontaneous hydrolysis and promotes its binding to the 30S ribosomal subunits. Also involved in the hydrolysis of GTP during the formation of the 70S ribosomal complex. This chain is Translation initiation factor IF-2, found in Anoxybacillus flavithermus (strain DSM 21510 / WK1).